The chain runs to 386 residues: Pepsin A (386 aa).

The signal sequence occupies residues 1-15 (MKWLLLLSLVALSEC). Residues 16-60 (YIYKVPLVKKKSLRKNLMEQGLLQDYLKTHSINPASKYLKEAASM) constitute a propeptide, activation peptide. The Peptidase A1 domain maps to 74–383 (YFGTIGIGTP…DRGNNQVGLA (310 aa)). Aspartate 92 is an active-site residue. 2 disulfide bridges follow: cysteine 105-cysteine 110 and cysteine 266-cysteine 270. Aspartate 275 is a catalytic residue. Residues cysteine 309 and cysteine 342 are joined by a disulfide bond.

The protein belongs to the peptidase A1 family.

The protein resides in the secreted. The catalysed reaction is Preferential cleavage: hydrophobic, preferably aromatic, residues in P1 and P1' positions. Cleaves 1-Phe-|-Val-2, 4-Gln-|-His-5, 13-Glu-|-Ala-14, 14-Ala-|-Leu-15, 15-Leu-|-Tyr-16, 16-Tyr-|-Leu-17, 23-Gly-|-Phe-24, 24-Phe-|-Phe-25 and 25-Phe-|-Tyr-26 bonds in the B chain of insulin.. Its function is as follows. Shows particularly broad specificity; although bonds involving phenylalanine and leucine are preferred, many others are also cleaved to some extent. This is Pepsin A (PGA) from Rhinolophus ferrumequinum (Greater horseshoe bat).